An 84-amino-acid polypeptide reads, in one-letter code: Small ribosomal subunit protein bS20 (84 aa).

The protein belongs to the bacterial ribosomal protein bS20 family.

In terms of biological role, binds directly to 16S ribosomal RNA. This chain is Small ribosomal subunit protein bS20, found in Bacteroides fragilis (strain ATCC 25285 / DSM 2151 / CCUG 4856 / JCM 11019 / LMG 10263 / NCTC 9343 / Onslow / VPI 2553 / EN-2).